The following is a 372-amino-acid chain: Probable inactive receptor-like protein kinase At1g65250 (372 aa).

Residues 1 to 4 (MGWL) and Lys38 each bind ATP. A Protein kinase domain is found at 1 to 314 (MGWLRKKKKP…QERCQMKAFL (314 aa)). 2 positions are modified to phosphotyrosine: Tyr128 and Tyr221. The segment at 348-372 (SSSLSSGQTQLDSAQDISSTVVLSN) is disordered. Positions 354 to 372 (GQTQLDSAQDISSTVVLSN) are enriched in polar residues.

Belongs to the protein kinase superfamily.

The polypeptide is Probable inactive receptor-like protein kinase At1g65250 (Arabidopsis thaliana (Mouse-ear cress)).